The chain runs to 588 residues: MQKKTLSISCNPFPASRKIYQQSLLFSDVRVPLREISLTDGSNEKPLKVYDTSGPYTDKDTIIDFTKGLPAISLPWLSKRADTESYSARSVKPEDNGLAYDTKTVPAFKQKRPILRAKNGKAITQMAYARAGIITAEMEYVAIRENEGLEIKNQQKAQSDETCNGSIPEIYTAEFVRNEIACGRAIIPKNINHPECEPMIIGRNFRVKINANIGNSAVTSSMAEEIDKMVWAIHWGADTVMDLSTGRNIHNIREWILRNSPVPIGTVPLYQALEKVQGIAENLTWDIFRDTLIEQAEQGVDYFTIHAGLRLPFIPLTANRVTGIVSRGGSIMAKWCLHHHTESFLYEHFNEICDIARTYDISLSLGDGLRPGSIADANDEAQFAELKTLGELTKIAWAKDVQVMIEGPGHIPMHKIKENMEQQLDLCHEAPFYTLGPLTTDIAPGYDHITSAIGAAMIGWFGTAMLCYVTPKEHLGLPDKNDVKTGVITYKIAAHAADLAKGLPRAQLRDNALSRARFDFRWHDQFNLSLDPETACAFHDETMPKEAHKLVHFCSMCGPKFCSMRISHDIREAAAINKPKGDGIGCQV.

Substrate-binding positions include Asn212, Met241, Tyr270, His306, Ser326 to Gly328, Asp367 to Arg370, and Glu406. Residue His410 participates in Zn(2+) binding. Residue Tyr433 participates in substrate binding. Zn(2+) is bound at residue His474. Residues Cys554, Cys557, and Cys562 each contribute to the [4Fe-4S] cluster site.

The protein belongs to the ThiC family. As to quaternary structure, homodimer. [4Fe-4S] cluster serves as cofactor.

The enzyme catalyses 5-amino-1-(5-phospho-beta-D-ribosyl)imidazole + S-adenosyl-L-methionine = 4-amino-2-methyl-5-(phosphooxymethyl)pyrimidine + CO + 5'-deoxyadenosine + formate + L-methionine + 3 H(+). Its pathway is cofactor biosynthesis; thiamine diphosphate biosynthesis. Its function is as follows. Catalyzes the synthesis of the hydroxymethylpyrimidine phosphate (HMP-P) moiety of thiamine from aminoimidazole ribotide (AIR) in a radical S-adenosyl-L-methionine (SAM)-dependent reaction. This Bartonella quintana (strain Toulouse) (Rochalimaea quintana) protein is Phosphomethylpyrimidine synthase.